The following is a 246-amino-acid chain: Probable transcriptional regulatory protein HSM_1763 (246 aa).

Belongs to the TACO1 family.

The protein localises to the cytoplasm. In Histophilus somni (strain 2336) (Haemophilus somnus), this protein is Probable transcriptional regulatory protein HSM_1763.